The primary structure comprises 130 residues: Small ribosomal subunit protein uS11 (130 aa).

It belongs to the universal ribosomal protein uS11 family. As to quaternary structure, part of the 30S ribosomal subunit. Interacts with proteins S7 and S18. Binds to IF-3.

Its function is as follows. Located on the platform of the 30S subunit, it bridges several disparate RNA helices of the 16S rRNA. Forms part of the Shine-Dalgarno cleft in the 70S ribosome. This chain is Small ribosomal subunit protein uS11, found in Lactobacillus helveticus (strain DPC 4571).